The primary structure comprises 243 residues: 3-deoxy-manno-octulosonate cytidylyltransferase (243 aa).

This sequence belongs to the KdsB family.

Its subcellular location is the cytoplasm. It carries out the reaction 3-deoxy-alpha-D-manno-oct-2-ulosonate + CTP = CMP-3-deoxy-beta-D-manno-octulosonate + diphosphate. It functions in the pathway nucleotide-sugar biosynthesis; CMP-3-deoxy-D-manno-octulosonate biosynthesis; CMP-3-deoxy-D-manno-octulosonate from 3-deoxy-D-manno-octulosonate and CTP: step 1/1. Its pathway is bacterial outer membrane biogenesis; lipopolysaccharide biosynthesis. In terms of biological role, activates KDO (a required 8-carbon sugar) for incorporation into bacterial lipopolysaccharide in Gram-negative bacteria. The protein is 3-deoxy-manno-octulosonate cytidylyltransferase of Bartonella bacilliformis (strain ATCC 35685 / KC583 / Herrer 020/F12,63).